The following is a 419-amino-acid chain: MRKIIINGGKALSGEVAVSGAKNSVVALIPAIILADDIVILDGVPAISDVDSLIEIMELMGATVNYHGDTLEIDPRGVQDIPMPYGKINSLRASYYFYGSLLGRFGQAVVGLPGGCDLGPRPIDLHLKAFEAMGVEVSYEGENMNLSTNGQKIHGAHIYMDTVSVGATINTMVAATKAQGKTVIENAAREPEIIDVATLLNNMGAHIRGAGTDIITIQGVQKLHGTRHQVIPDRIEAGTYIALAAAIGKGIKITNVLYEHLESFIAKLEEMGVRMTVEEDAIFVEKQESLKAITIKTSPYPGFATDLQQPLTPLLLKADGRGTIIDTIYEKRINHVPELMRMGADISVIGGQIVYQGPSRLTGAQVKATDLRAGAALVTAGLMAEGKTEITNIEFILRGYASIIAKLTALGADIQLIED.

Phosphoenolpyruvate is bound at residue 22–23 (KN). R92 is a binding site for UDP-N-acetyl-alpha-D-glucosamine. Catalysis depends on C116, which acts as the Proton donor. Residue C116 is modified to 2-(S-cysteinyl)pyruvic acid O-phosphothioketal. Residues 121–125 (RPIDL), D306, and I328 each bind UDP-N-acetyl-alpha-D-glucosamine.

It belongs to the EPSP synthase family. MurA subfamily.

The protein resides in the cytoplasm. The catalysed reaction is phosphoenolpyruvate + UDP-N-acetyl-alpha-D-glucosamine = UDP-N-acetyl-3-O-(1-carboxyvinyl)-alpha-D-glucosamine + phosphate. The protein operates within cell wall biogenesis; peptidoglycan biosynthesis. In terms of biological role, cell wall formation. Adds enolpyruvyl to UDP-N-acetylglucosamine. This chain is UDP-N-acetylglucosamine 1-carboxyvinyltransferase 2, found in Streptococcus pyogenes serotype M18 (strain MGAS8232).